Consider the following 306-residue polypeptide: Ornithine carbamoyltransferase (306 aa).

Carbamoyl phosphate contacts are provided by residues 54–57 (STRT), glutamine 81, arginine 105, and 132–135 (HPLQ). L-ornithine is bound by residues asparagine 162, aspartate 226, and 230 to 231 (SM). Residues 266–267 (CL) and arginine 294 each bind carbamoyl phosphate.

Belongs to the aspartate/ornithine carbamoyltransferase superfamily. OTCase family.

The protein localises to the cytoplasm. The catalysed reaction is carbamoyl phosphate + L-ornithine = L-citrulline + phosphate + H(+). It participates in amino-acid biosynthesis; L-arginine biosynthesis; L-arginine from L-ornithine and carbamoyl phosphate: step 1/3. In terms of biological role, reversibly catalyzes the transfer of the carbamoyl group from carbamoyl phosphate (CP) to the N(epsilon) atom of ornithine (ORN) to produce L-citrulline. This Sulfolobus acidocaldarius (strain ATCC 33909 / DSM 639 / JCM 8929 / NBRC 15157 / NCIMB 11770) protein is Ornithine carbamoyltransferase.